The chain runs to 521 residues: RING-type E3 ubiquitin-protein ligase PPIL2 (521 aa).

A U-box domain is found at 35 to 108 (RRLPFDHCSL…GQYHCPVLYS (74 aa)). Residues 197–217 (LKNTNSETRETLQELYKEFKG) adopt a coiled-coil conformation. A Glycyl lysine isopeptide (Lys-Gly) (interchain with G-Cter in SUMO2) cross-link involves residue lysine 216. Residues 278–433 (KKGYVRLHTN…EEVLICTTTV (156 aa)) form the PPIase cyclophilin-type domain. Residues 447–462 (QERKKTQHQVDPEAKV) are compositionally biased toward basic and acidic residues. The disordered stretch occupies residues 447-521 (QERKKTQHQV…SRGFGDFSSW (75 aa)). Residues 465-478 (SQPQPGNQGPQTYR) show a composition bias toward polar residues. An N6-acetyllysine modification is found at lysine 483.

Belongs to the cyclophilin-type PPIase family. PPIL2 subfamily. As to quaternary structure, component of the minor spliceosome, which splices U12-type introns. Within this complex, interacts with PRPF8/PRP8, EFTUD2/SNU114 and PLRG1. Interacts with isoform 2 of BSG. Interacts (via the PPIase cyclophilin-type domain) with CRNKL1; they may form a trimeric complex with HSP90.

The protein localises to the nucleus. The catalysed reaction is S-ubiquitinyl-[E2 ubiquitin-conjugating enzyme]-L-cysteine + [acceptor protein]-L-lysine = [E2 ubiquitin-conjugating enzyme]-L-cysteine + N(6)-ubiquitinyl-[acceptor protein]-L-lysine.. Its pathway is protein modification; protein ubiquitination. Has a ubiquitin-protein ligase activity acting as an E3 ubiquitin protein ligase or as an ubiquitin-ubiquitin ligase promoting elongation of ubiquitin chains on substrates. By mediating 'Lys-48'-linked polyubiquitination of proteins could target them for proteasomal degradation. May also function as a chaperone, playing a role in transport to the cell membrane of BSG/Basigin for instance. Probable inactive PPIase with no peptidyl-prolyl cis-trans isomerase activity. As a component of the minor spliceosome, involved in the splicing of U12-type introns in pre-mRNAs. This is RING-type E3 ubiquitin-protein ligase PPIL2 from Mus musculus (Mouse).